The sequence spans 509 residues: Lysophospholipid acyltransferase (509 aa).

At M1–S14 the chain is on the lumenal side. A helical membrane pass occupies residues F15–F35. Residues A36–S55 lie on the Cytoplasmic side of the membrane. The helical transmembrane segment at I56 to F76 threads the bilayer. The Lumenal segment spans residues D77 to P94. Residues W95–Y115 traverse the membrane as a helical segment. Topologically, residues P116–R223 are cytoplasmic. A helical membrane pass occupies residues G224–L244. The Lumenal segment spans residues T245–P246. Residues K247–A267 form a helical membrane-spanning segment. Topologically, residues R268–D410 are cytoplasmic. H363 is a catalytic residue. A helical membrane pass occupies residues V411–L431. Over N432–K441 the chain is Lumenal. Residues E442–I462 form a helical membrane-spanning segment. The Cytoplasmic portion of the chain corresponds to R463 to E509. The tract at residues S488–E509 is disordered. S490 carries the post-translational modification Phosphoserine. The segment covering P500–E509 has biased composition (basic and acidic residues).

Belongs to the membrane-bound acyltransferase family.

The protein resides in the endoplasmic reticulum membrane. It localises to the microsome membrane. The catalysed reaction is a 1-acyl-sn-glycero-3-phosphate + an acyl-CoA = a 1,2-diacyl-sn-glycero-3-phosphate + CoA. It carries out the reaction a 1-acyl-sn-glycero-3-phosphocholine + an acyl-CoA = a 1,2-diacyl-sn-glycero-3-phosphocholine + CoA. It catalyses the reaction a 1-acyl-sn-glycero-3-phosphoethanolamine + an acyl-CoA = a 1,2-diacyl-sn-glycero-3-phosphoethanolamine + CoA. Functionally, membrane-bound O-acyltransferase that mediates the incorporation of unsaturated acyl chains into the sn-2 position of phospholipids. This is Lysophospholipid acyltransferase (ale1) from Schizosaccharomyces pombe (strain 972 / ATCC 24843) (Fission yeast).